Reading from the N-terminus, the 359-residue chain is MVSLSQDRMKQIEKRFEIIESQMAQNPNAETYVKLASEYAELQQIVTPIRTLNALYKEVTELEAMANTTQIDADMYALAQEELVLLRQKIEQLEQEIQILLLPKDIADEKSAIIEIRAGTGGSEAALFAGDLFRMYERYANAHKWKVEVVSLSDSEVGGYKEIIATISGKGVFSKLKFESGVHRVQRVPETETSGRIHTSAATVAVLPEAEEIDIEIRPEDIRIDTMRASGAGGQHVNTTDSAVRITHIPTGIMVVQAEKSQHQNRARALQILRSRLFDIERQKAESERSASRKTQVGSGDRSERIRTYNFPQGRVTDHRINLTLYKLDRIMEGDLDELINPLISNHQTALLTEINDNA.

An N5-methylglutamine modification is found at Gln-235. The disordered stretch occupies residues 283–305 (QKAESERSASRKTQVGSGDRSER).

The protein belongs to the prokaryotic/mitochondrial release factor family. Methylated by PrmC. Methylation increases the termination efficiency of RF1.

Its subcellular location is the cytoplasm. Functionally, peptide chain release factor 1 directs the termination of translation in response to the peptide chain termination codons UAG and UAA. This Bartonella bacilliformis (strain ATCC 35685 / KC583 / Herrer 020/F12,63) protein is Peptide chain release factor 1.